Here is a 324-residue protein sequence, read N- to C-terminus: Uroporphyrinogen decarboxylase (324 aa).

Substrate contacts are provided by residues 14–18, Phe-32, Asp-63, Tyr-136, Ser-191, and His-302; that span reads RQAGR.

Belongs to the uroporphyrinogen decarboxylase family. In terms of assembly, homodimer.

It is found in the cytoplasm. It carries out the reaction uroporphyrinogen III + 4 H(+) = coproporphyrinogen III + 4 CO2. It functions in the pathway porphyrin-containing compound metabolism; protoporphyrin-IX biosynthesis; coproporphyrinogen-III from 5-aminolevulinate: step 4/4. Its function is as follows. Catalyzes the decarboxylation of four acetate groups of uroporphyrinogen-III to yield coproporphyrinogen-III. The protein is Uroporphyrinogen decarboxylase of Neorickettsia sennetsu (strain ATCC VR-367 / Miyayama) (Ehrlichia sennetsu).